A 448-amino-acid chain; its full sequence is Cyclic dof factor 3 (448 aa).

Residues 26-108 (AVTVEDDEED…DGKTLKKPTK (83 aa)) are disordered. A compositionally biased stretch (acidic residues) spans 29–39 (VEDDEEDDWSG). The segment covering 40-54 (GDDKSPEKVTPELSD) has biased composition (basic and acidic residues). A compositionally biased stretch (low complexity) spans 55–69 (KNNNNCNDNSFNNSK). Residues 80–99 (STDQIESSDTPEDNQQTTPD) are compositionally biased toward polar residues. A Dof-type zinc finger spans residues 110–164 (LPCPRCKSMETKFCYYNNYNINQPRHFCKACQRYWTAGGTMRNVPVGAGRRKNKS). Zn(2+)-binding residues include C112, C115, C137, and C140. Disordered stretches follow at residues 243 to 269 (NGDDCSSGSSVTTSNNHSVDESRAQSG) and 332 to 370 (SSSPISQKCSNTNSPTLGKHPRDEGSSKKDNETERKQKA). 2 stretches are compositionally biased toward polar residues: residues 246 to 259 (DCSSGSSVTTSNNH) and 332 to 347 (SSSPISQKCSNTNSPT). The span at 351 to 368 (HPRDEGSSKKDNETERKQ) shows a compositional bias: basic and acidic residues.

In terms of assembly, interacts with ADO2 (via kelch repeats) and ADO3 (via kelch repeats). Expressed in the vasculature of cotyledons and hypocotyls, leaves and roots.

It localises to the nucleus. Functionally, transcription factor that binds specifically to a 5'-AA[AG]G-3' consensus core sequence. Regulates a photoperiodic flowering response. Transcriptional repressor of 'CONSTANS' expression. The polypeptide is Cyclic dof factor 3 (CDF3) (Arabidopsis thaliana (Mouse-ear cress)).